A 572-amino-acid chain; its full sequence is Chaperonin CPN60-like 2, mitochondrial (572 aa).

The N-terminal 31 residues, 1–31, are a transit peptide targeting the mitochondrion; sequence MYRVLSKLSSSIGSSTSRKLVSGRIISSRNY.

The protein belongs to the chaperonin (HSP60) family.

Its subcellular location is the mitochondrion. Its function is as follows. Implicated in mitochondrial protein import and macromolecular assembly. May facilitate the correct folding of imported proteins. May also prevent misfolding and promote the refolding and proper assembly of unfolded polypeptides generated under stress conditions in the mitochondrial matrix. This Arabidopsis thaliana (Mouse-ear cress) protein is Chaperonin CPN60-like 2, mitochondrial.